A 228-amino-acid chain; its full sequence is Large ribosomal subunit protein bL25 (228 aa).

The tract at residues 1–24 (MATVMELKATARPKSGKGAARAER) is disordered.

It belongs to the bacterial ribosomal protein bL25 family. CTC subfamily. Part of the 50S ribosomal subunit; part of the 5S rRNA/L5/L18/L25 subcomplex. Contacts the 5S rRNA. Binds to the 5S rRNA independently of L5 and L18.

In terms of biological role, this is one of the proteins that binds to the 5S RNA in the ribosome where it forms part of the central protuberance. In Nitrobacter winogradskyi (strain ATCC 25391 / DSM 10237 / CIP 104748 / NCIMB 11846 / Nb-255), this protein is Large ribosomal subunit protein bL25.